The primary structure comprises 377 residues: Diels-Alderase fsa2 (377 aa).

This sequence belongs to the Diels-Alderase family.

The catalysed reaction is (5S)-3-[(2E,6R,8E,10E,12E)-2,6-dimethyltetradeca-2,8,10,12-tetraenoyl]-5-(hydroxymethyl)pyrrolidine-2,4-dione = trichosetin. Its pathway is mycotoxin biosynthesis. Diels-Alderase; part of the gene cluster that mediates the biosynthesis of equisetin, a trans-fused decalin-containing tetramic acid with antimicrobial activity. The PKS module of eqxS together with the enoylreductase eqxC catalyze the formation of the polyketide unit which is then conjugated to L-serine by the condensation domain of the eqxS NRPS module. Activity of the Dieckmann cyclase domain (RED) results in release of the Dieckmann product intermediate. Diels-Alderase eqx3 is involved in endo-selective Diels-Alder cycloaddition to form the decalin ring, leading to the production of N-desmethylequisetin also called trichosetin. Subsequent N-methylation is carried out by eqxD to give equisetin. The protein is Diels-Alderase fsa2 of Fusarium heterosporum.